Consider the following 108-residue polypeptide: Nucleoid-associated protein mma_2329 (108 aa).

It belongs to the YbaB/EbfC family. In terms of assembly, homodimer.

The protein localises to the cytoplasm. Its subcellular location is the nucleoid. In terms of biological role, binds to DNA and alters its conformation. May be involved in regulation of gene expression, nucleoid organization and DNA protection. The polypeptide is Nucleoid-associated protein mma_2329 (Janthinobacterium sp. (strain Marseille) (Minibacterium massiliensis)).